The sequence spans 825 residues: Quinic acid utilization activator (825 aa).

The span at Met1–Asn12 shows a compositional bias: polar residues. Residues Met1–Val45 form a disordered region. Residues Arg18 to Arg28 are compositionally biased toward basic and acidic residues. Residues Cys49–Cys76 constitute a DNA-binding region (zn(2)-C6 fungal-type). Disordered stretches follow at residues Glu160–Leu186, Gln204–Leu224, and Gly658–Gly683. Residues Asp165–Ile174 show a composition bias toward basic and acidic residues. Over residues Gly658–His672 the composition is skewed to polar residues.

It localises to the nucleus. Transcription activation of genes for enzymes and proteins of quinate metabolism by binding to a 16 base-pair sequence (consensus 5'-GGATAANNNNTTATCC-3') in front of each qut gene. The chain is Quinic acid utilization activator (qutA) from Emericella nidulans (strain FGSC A4 / ATCC 38163 / CBS 112.46 / NRRL 194 / M139) (Aspergillus nidulans).